Consider the following 251-residue polypeptide: Ubiquinone/menaquinone biosynthesis C-methyltransferase UbiE (251 aa).

S-adenosyl-L-methionine-binding positions include T74, D95, 123 to 124 (NA), and S140.

It belongs to the class I-like SAM-binding methyltransferase superfamily. MenG/UbiE family.

It carries out the reaction a 2-demethylmenaquinol + S-adenosyl-L-methionine = a menaquinol + S-adenosyl-L-homocysteine + H(+). The enzyme catalyses a 2-methoxy-6-(all-trans-polyprenyl)benzene-1,4-diol + S-adenosyl-L-methionine = a 5-methoxy-2-methyl-3-(all-trans-polyprenyl)benzene-1,4-diol + S-adenosyl-L-homocysteine + H(+). The protein operates within quinol/quinone metabolism; menaquinone biosynthesis; menaquinol from 1,4-dihydroxy-2-naphthoate: step 2/2. It functions in the pathway cofactor biosynthesis; ubiquinone biosynthesis. Functionally, methyltransferase required for the conversion of demethylmenaquinol (DMKH2) to menaquinol (MKH2) and the conversion of 2-polyprenyl-6-methoxy-1,4-benzoquinol (DDMQH2) to 2-polyprenyl-3-methyl-6-methoxy-1,4-benzoquinol (DMQH2). The protein is Ubiquinone/menaquinone biosynthesis C-methyltransferase UbiE of Pectobacterium carotovorum subsp. carotovorum (strain PC1).